Consider the following 652-residue polypeptide: 2-oxoglutarate carboxylase large subunit (652 aa).

The 263-residue stretch at 26–288 folds into the Pyruvate carboxyltransferase domain; sequence ILITDLTPRD…DTGIDMKKLD (263 aa). Substrate-binding positions include 34-38 and arginine 105; that span reads RDGQQ. Aspartate 35 lines the a divalent metal cation pocket. A divalent metal cation-binding residues include lysine 196, histidine 227, and histidine 229. Lysine 196 is modified (N6-carboxylysine). Threonine 362 is a binding site for substrate. Positions 563 to 643 constitute a Biotinyl-binding domain; that stretch reads AEEKGIPKAT…TPDDALLRIK (81 aa). Lysine 609 carries the N6-biotinyllysine modification.

In terms of assembly, heterohexadecamer of 8 large subunits and 8 small subunits. The cofactor is Mg(2+). Mn(2+) serves as cofactor. It depends on Co(2+) as a cofactor. In terms of processing, biotinylated.

It catalyses the reaction hydrogencarbonate + 2-oxoglutarate + ATP = (S)-oxalosuccinate + ADP + phosphate + H(+). This Hydrogenobacter thermophilus (strain DSM 6534 / IAM 12695 / TK-6) protein is 2-oxoglutarate carboxylase large subunit.